We begin with the raw amino-acid sequence, 359 residues long: Tropomodulin-1 (359 aa).

Residues 36-61 form a disordered region; sequence ELDPDNALLPAGLRQKDQTTKAPTGP. Residues 39-138 form a tropomyosin-binding region; that stretch reads PDNALLPAGL…CDIAAILGMH (100 aa).

It belongs to the tropomodulin family. Binds to the N-terminus of tropomyosin and to actin. Interacts with FLII. Highly expressed in the erythrocyte, heart and skeletal muscle.

It localises to the cytoplasm. The protein resides in the cytoskeleton. Functionally, blocks the elongation and depolymerization of the actin filaments at the pointed end. The Tmod/TM complex contributes to the formation of the short actin protofilament, which in turn defines the geometry of the membrane skeleton. The sequence is that of Tropomodulin-1 (Tmod1) from Mus musculus (Mouse).